The chain runs to 109 residues: MLMNRFVLKRVRQGKPLNKPRLSIFCSHKHIYAQIIDDMVGRTLVSASTYHYKQGWHSTMKDAQEVGQKLAQQALEKGIQQVVLDRGSYRYHGKIRALAEAARKEGLKI.

It belongs to the universal ribosomal protein uL18 family. In terms of assembly, part of the 50S ribosomal subunit; contacts the 5S rRNA.

Its subcellular location is the plastid. It is found in the chloroplast. Functionally, binds 5S rRNA, forms part of the central protuberance of the 50S subunit. This chain is Large ribosomal subunit protein uL18c (rpl18), found in Cyanidioschyzon merolae (strain NIES-3377 / 10D) (Unicellular red alga).